Here is a 20-residue protein sequence, read N- to C-terminus: Alanine aminotransferase 1 (20 aa).

Lysine 11 is subject to N6-(pyridoxal phosphate)lysine. The N-linked (Glc) (glycation) lysine; in vitro glycan is linked to lysine 11.

It belongs to the class-I pyridoxal-phosphate-dependent aminotransferase family. Alanine aminotransferase subfamily. Homodimer. The cofactor is pyridoxal 5'-phosphate. Glycation of Lys-11 inactivates the enzyme.

It is found in the cytoplasm. The catalysed reaction is L-alanine + 2-oxoglutarate = pyruvate + L-glutamate. The protein operates within amino-acid degradation; L-alanine degradation via transaminase pathway; pyruvate from L-alanine: step 1/1. Its function is as follows. Catalyzes the reversible transamination between alanine and 2-oxoglutarate to form pyruvate and glutamate. Participates in cellular nitrogen metabolism and also in liver gluconeogenesis starting with precursors transported from skeletal muscles. This chain is Alanine aminotransferase 1 (GPT), found in Sus scrofa (Pig).